A 394-amino-acid polypeptide reads, in one-letter code: p-hydroxybenzoate hydroxylase (394 aa).

FAD is bound by residues Ser-13, Glu-32, 42–47 (RIRAGV), and Gln-102. Residues Tyr-201, 212-214 (SQR), and Tyr-222 each bind substrate. Residue Asp-286 coordinates FAD. Pro-293 provides a ligand contact to substrate. 299–300 (LN) contributes to the FAD binding site.

The protein belongs to the aromatic-ring hydroxylase family. In terms of assembly, homodimer. It depends on FAD as a cofactor.

It catalyses the reaction 4-hydroxybenzoate + NADPH + O2 + H(+) = 3,4-dihydroxybenzoate + NADP(+) + H2O. It participates in aromatic compound metabolism; benzoate degradation via hydroxylation; 3,4-dihydroxybenzoate from benzoate: step 2/2. Functionally, catalyzes the incorporation of an atom of dioxygen into p-hydroxybenzoate (p-OHB) to form 3,4-dihydroxybenzoate (3,4DOHB). The reaction occurs in two parts: reduction of the flavin adenine dinucleotide (FAD) in the enzyme by reduced nicotinamide adenine dinucleotide phosphate (NADPH) in response to binding p-hydroxybenzoate to the enzyme and oxidation of reduced FAD with oxygen to form a hydroperoxide, which then oxygenates p-hydroxybenzoate. The chain is p-hydroxybenzoate hydroxylase (pobA) from Pseudomonas fluorescens.